Consider the following 238-residue polypeptide: Ribonuclease PH (238 aa).

Phosphate is bound by residues Arg86 and 124–126 (GTR).

Belongs to the RNase PH family. In terms of assembly, homohexameric ring arranged as a trimer of dimers.

The catalysed reaction is tRNA(n+1) + phosphate = tRNA(n) + a ribonucleoside 5'-diphosphate. Its function is as follows. Phosphorolytic 3'-5' exoribonuclease that plays an important role in tRNA 3'-end maturation. Removes nucleotide residues following the 3'-CCA terminus of tRNAs; can also add nucleotides to the ends of RNA molecules by using nucleoside diphosphates as substrates, but this may not be physiologically important. Probably plays a role in initiation of 16S rRNA degradation (leading to ribosome degradation) during starvation. The polypeptide is Ribonuclease PH (Phenylobacterium zucineum (strain HLK1)).